A 344-amino-acid chain; its full sequence is Zinc metalloproteinase nas-6 (344 aa).

Residues 1–19 (MLDHVLLLTYCLVSTVVRS) form the signal peptide. Positions 72-266 (NALKNKQLTW…VKINKLYSCK (195 aa)) constitute a Peptidase M12A domain. 5 disulfides stabilise this stretch: Cys-114-Cys-265, Cys-135-Cys-154, Cys-300-Cys-334, Cys-307-Cys-327, and Cys-314-Cys-331. His-162 provides a ligand contact to Zn(2+). Glu-163 is a catalytic residue. Zn(2+) is bound by residues His-166 and His-172. In terms of domain architecture, ShKT spans 300 to 334 (CVDHFADCPHFAQYCTRASFFFVMKSYCPFTCKHC).

Requires Zn(2+) as cofactor. As to expression, expressed in pharyngeal and body wall muscles, intestine, hypodermis and pharyngeal mc2 cells.

It localises to the secreted. In terms of biological role, metalloprotease. The chain is Zinc metalloproteinase nas-6 (nas-6) from Caenorhabditis elegans.